We begin with the raw amino-acid sequence, 291 residues long: Gamma-sarcoglycan (291 aa).

The helical; Signal-anchor for type II membrane protein transmembrane segment at 38–58 (LFVLLLLIILLVNFALTIWIL) threads the bilayer. Topologically, residues 59 to 291 (KVMWFSPTGM…TCHEHSHICL (233 aa)) are extracellular. Asn110 carries an N-linked (GlcNAc...) asparagine glycan. Disulfide bonds link Cys265-Cys290 and Cys267-Cys283.

The protein belongs to the sarcoglycan beta/delta/gamma/zeta family. Interacts with the syntrophin SNTA1. Cross-link to form 2 major subcomplexes: one consisting of SGCB, SGCD and SGCG and the other consisting of SGCB and SGCD. The association between SGCB and SGCG is particularly strong while SGCA is loosely associated with the other sarcoglycans. Interacts with FLNC. In terms of processing, disulfide bonds are present.

The protein localises to the cell membrane. It is found in the sarcolemma. The protein resides in the cytoplasm. It localises to the cytoskeleton. In terms of biological role, component of the sarcoglycan complex, a subcomplex of the dystrophin-glycoprotein complex which forms a link between the F-actin cytoskeleton and the extracellular matrix. The polypeptide is Gamma-sarcoglycan (SGCG) (Canis lupus familiaris (Dog)).